The primary structure comprises 1157 residues: uncharacterized protein (1157 aa).

The N-terminal stretch at 1-18 (MNRNIFITLLISLLALSG) is a signal peptide. C19 is lipidated: N-palmitoyl cysteine. Residue C19 is the site of S-diacylglycerol cysteine attachment. The next 4 membrane-spanning stretches (helical) occupy residues 292–312 (LSVSALLTLYIMFTGFSFLIG), 394–414 (LGFIYIILYLIALYFIFLLIF), 423–443 (ALITIGMIITMAPIFICFMLF), and 458–478 (ISYAIQPIILFVGIAFIGMII). Positions 1134-1157 (QYQKPVENSGRKLRKLEDHLRNMK) are disordered. Residues 1148–1157 (KLEDHLRNMK) show a composition bias toward basic and acidic residues.

The protein belongs to the TrbL/VirB6 family.

It localises to the cell membrane. This is an uncharacterized protein from Rickettsia bellii (strain RML369-C).